Here is a 232-residue protein sequence, read N- to C-terminus: U-scoloptoxin(11)-Ssd2a (232 aa).

Residues 1–21 form the signal peptide; it reads MFQFCLLILLLAPGRFFSALG. The propeptide occupies 22–32; the sequence is KPQETLTVENR.

Post-translationally, contains 8 disulfide bonds. In terms of tissue distribution, expressed by the venom gland.

The protein localises to the secreted. This is U-scoloptoxin(11)-Ssd2a from Scolopendra dehaani (Thai centipede).